Reading from the N-terminus, the 115-residue chain is Large ribosomal subunit protein P2x (115 aa).

Residues 78–115 (GGGGGAASAAEPVAESKKKVEEVKDESSDDAGMMGLFD) are disordered. A compositionally biased stretch (basic and acidic residues) spans 91 to 103 (AESKKKVEEVKDE). Phosphoserine occurs at positions 104 and 105.

The protein belongs to the eukaryotic ribosomal protein P1/P2 family. P1 and P2 exist as dimers at the large ribosomal subunit.

In terms of biological role, plays an important role in the elongation step of protein synthesis. This Arabidopsis thaliana (Mouse-ear cress) protein is Large ribosomal subunit protein P2x (RPP2C).